Here is a 94-residue protein sequence, read N- to C-terminus: Integration host factor subunit beta (94 aa).

It belongs to the bacterial histone-like protein family. As to quaternary structure, heterodimer of an alpha and a beta chain.

Its function is as follows. This protein is one of the two subunits of integration host factor, a specific DNA-binding protein that functions in genetic recombination as well as in transcriptional and translational control. The protein is Integration host factor subunit beta of Escherichia coli O127:H6 (strain E2348/69 / EPEC).